The primary structure comprises 245 residues: E3 ubiquitin-protein ligase RNF138 (245 aa).

Alanine 2 is modified (N-acetylalanine). The RING-type zinc finger occupies 18-58; the sequence is CPVCQEVLKTPVRTTACQHVFCRKCFLTAMRESGAHCPLCR. The Zn(2+) site is built by cysteine 86, cysteine 89, histidine 101, and cysteine 105. Residues 86 to 105 form a C2HC RNF-type zinc finger; sequence CRCCAKQIKFYRMRHHYKSC. Residues 125–154 are disordered; sequence QDSVGNSNRSETSTSDNTETYQENTSSSGH. Phosphothreonine is present on threonine 142. C2H2-type zinc fingers lie at residues 157–180 and 187–215; these read FKCP…NSNH and VTCP…NQRH. In terms of domain architecture, UIM spans 225-243; it reads LQLDEETQYQTAVEESFQV.

As to quaternary structure, interacts with NLK. Interacts with XRCC5/Ku80. Interacts with RBBP8/CtIP. Auto-ubiquitinated.

Its subcellular location is the chromosome. It carries out the reaction S-ubiquitinyl-[E2 ubiquitin-conjugating enzyme]-L-cysteine + [acceptor protein]-L-lysine = [E2 ubiquitin-conjugating enzyme]-L-cysteine + N(6)-ubiquitinyl-[acceptor protein]-L-lysine.. The protein operates within protein modification; protein ubiquitination. E3 ubiquitin-protein ligase involved in DNA damage response by promoting DNA resection and homologous recombination. Recruited to sites of double-strand breaks following DNA damage and specifically promotes double-strand break repair via homologous recombination. Two different, non-exclusive, mechanisms have been proposed. According to a report, regulates the choice of double-strand break repair by favoring homologous recombination over non-homologous end joining (NHEJ): acts by mediating ubiquitination of XRCC5/Ku80, leading to remove the Ku complex from DNA breaks, thereby promoting homologous recombination. According to another report, cooperates with UBE2Ds E2 ubiquitin ligases (UBE2D1, UBE2D2, UBE2D3 or UBE2D4) to promote homologous recombination by mediating ubiquitination of RBBP8/CtIP. Together with NLK, involved in the ubiquitination and degradation of TCF/LEF. Also exhibits auto-ubiquitination activity in combination with UBE2K. May act as a negative regulator in the Wnt/beta-catenin-mediated signaling pathway. The protein is E3 ubiquitin-protein ligase RNF138 of Homo sapiens (Human).